The chain runs to 187 residues: Holliday junction branch migration complex subunit RuvA (187 aa).

A domain I region spans residues 1–64; it reads MIEYIRGIIE…EDGFQIFGFK (64 aa). The segment at 65 to 136 is domain II; the sequence is RKEELELFEK…ELKDKVPKEV (72 aa). The tract at residues 136 to 139 is flexible linker; sequence VVVP. The segment at 140 to 187 is domain III; that stretch reads KEDSLLNEALEALLALGYTKSEAIYALSDVNCESVEQAVKEALKKLAK.

Belongs to the RuvA family. As to quaternary structure, homotetramer. Forms an RuvA(8)-RuvB(12)-Holliday junction (HJ) complex. HJ DNA is sandwiched between 2 RuvA tetramers; dsDNA enters through RuvA and exits via RuvB. An RuvB hexamer assembles on each DNA strand where it exits the tetramer. Each RuvB hexamer is contacted by two RuvA subunits (via domain III) on 2 adjacent RuvB subunits; this complex drives branch migration. In the full resolvosome a probable DNA-RuvA(4)-RuvB(12)-RuvC(2) complex forms which resolves the HJ.

The protein localises to the cytoplasm. The RuvA-RuvB-RuvC complex processes Holliday junction (HJ) DNA during genetic recombination and DNA repair, while the RuvA-RuvB complex plays an important role in the rescue of blocked DNA replication forks via replication fork reversal (RFR). RuvA specifically binds to HJ cruciform DNA, conferring on it an open structure. The RuvB hexamer acts as an ATP-dependent pump, pulling dsDNA into and through the RuvAB complex. HJ branch migration allows RuvC to scan DNA until it finds its consensus sequence, where it cleaves and resolves the cruciform DNA. The sequence is that of Holliday junction branch migration complex subunit RuvA from Caldanaerobacter subterraneus subsp. tengcongensis (strain DSM 15242 / JCM 11007 / NBRC 100824 / MB4) (Thermoanaerobacter tengcongensis).